A 71-amino-acid chain; its full sequence is Ubiquinol-cytochrome c reductase complex assembly factor 6 (71 aa).

The Mitochondrial matrix portion of the chain corresponds to Met1 to Ser8. A helical; Signal-anchor for type II membrane protein transmembrane segment spans residues Thr9 to Ala25. Topologically, residues Glu26 to Lys71 are mitochondrial intermembrane.

It belongs to the UQCC6 family. Interacts with UQCRC1. Interacts with UQCRQ. Interacts with UQCC5. Forms a complex, named COMB/coordinator of mitochondrial CYTB biogenesis, composed of UQCC1, UQCC2, UQCC4, UQCC5 and UQCC6; stabilizes nascent cytochrome b/MT-CYB and promotes its membrane insertion. Forms a complex, named COMA, composed of UQCC1, UQCC2 and UQCC4; activates MT-CYB translation. Forms a complex, named COMC, composed of UQCC1, UQCC2; UQCC3 and UQCC4; mediates MT-CYB hemylation and association with the first nuclear-encoded complex III subunit UQCRQ. Interacts with MT-CYB. Cardiac and skeletal muscle (at protein level).

It is found in the mitochondrion inner membrane. Functionally, required for the assembly and stability of the mitochondrial ubiquinol-cytochrome c reductase complex (complex III (CIII) or cytochrome b-c1 complex), a multisubunit transmembrane complex that is part of the mitochondrial electron transport chain (ETC) which drives oxidative phosphorylation. Mediates early complex III biogenesis. Participates in regulating the levels of electron transport chain proteins, and therefore energy supply, in response to changes in energy demand. Also required for cytochrome c oxidase complex (complex IV) assembly. The protein is Ubiquinol-cytochrome c reductase complex assembly factor 6 of Homo sapiens (Human).